The primary structure comprises 252 residues: Membrane protein insertase YidC (252 aa).

A signal peptide spans Met-1–Gly-20. Residue Cys-21 is the site of N-palmitoyl cysteine attachment. A lipid anchor (S-diacylglycerol cysteine) is attached at Cys-21. The next 5 membrane-spanning stretches (helical) occupy residues Tyr-59–Val-79, Leu-129–Ile-149, Phe-160–Thr-180, Ile-206–Leu-226, and Leu-228–Met-248.

The protein belongs to the OXA1/ALB3/YidC family. Type 2 subfamily.

It localises to the cell membrane. In terms of biological role, required for the insertion and/or proper folding and/or complex formation of integral membrane proteins into the membrane. Involved in integration of membrane proteins that insert both dependently and independently of the Sec translocase complex, as well as at least some lipoproteins. This chain is Membrane protein insertase YidC, found in Oceanobacillus iheyensis (strain DSM 14371 / CIP 107618 / JCM 11309 / KCTC 3954 / HTE831).